A 338-amino-acid chain; its full sequence is Holliday junction branch migration complex subunit RuvB (338 aa).

A large ATPase domain (RuvB-L) region spans residues 4-187 (ADKDRLVSGD…FGISEHMAYY (184 aa)). Residues Leu26, Arg27, Gly68, Lys71, Thr72, Thr73, 134–136 (EDF), Arg177, Tyr187, and Arg224 each bind ATP. Thr72 serves as a coordination point for Mg(2+). A small ATPAse domain (RuvB-S) region spans residues 188 to 258 (SADDLSEIVK…MVDHALDQLQ (71 aa)). The interval 261–338 (QQGLDQIDRK…AHMGMSAEQH (78 aa)) is head domain (RuvB-H). Residues Arg316 and Arg321 each contribute to the DNA site.

Belongs to the RuvB family. As to quaternary structure, homohexamer. Forms an RuvA(8)-RuvB(12)-Holliday junction (HJ) complex. HJ DNA is sandwiched between 2 RuvA tetramers; dsDNA enters through RuvA and exits via RuvB. An RuvB hexamer assembles on each DNA strand where it exits the tetramer. Each RuvB hexamer is contacted by two RuvA subunits (via domain III) on 2 adjacent RuvB subunits; this complex drives branch migration. In the full resolvosome a probable DNA-RuvA(4)-RuvB(12)-RuvC(2) complex forms which resolves the HJ.

The protein localises to the cytoplasm. It catalyses the reaction ATP + H2O = ADP + phosphate + H(+). Its function is as follows. The RuvA-RuvB-RuvC complex processes Holliday junction (HJ) DNA during genetic recombination and DNA repair, while the RuvA-RuvB complex plays an important role in the rescue of blocked DNA replication forks via replication fork reversal (RFR). RuvA specifically binds to HJ cruciform DNA, conferring on it an open structure. The RuvB hexamer acts as an ATP-dependent pump, pulling dsDNA into and through the RuvAB complex. RuvB forms 2 homohexamers on either side of HJ DNA bound by 1 or 2 RuvA tetramers; 4 subunits per hexamer contact DNA at a time. Coordinated motions by a converter formed by DNA-disengaged RuvB subunits stimulates ATP hydrolysis and nucleotide exchange. Immobilization of the converter enables RuvB to convert the ATP-contained energy into a lever motion, pulling 2 nucleotides of DNA out of the RuvA tetramer per ATP hydrolyzed, thus driving DNA branch migration. The RuvB motors rotate together with the DNA substrate, which together with the progressing nucleotide cycle form the mechanistic basis for DNA recombination by continuous HJ branch migration. Branch migration allows RuvC to scan DNA until it finds its consensus sequence, where it cleaves and resolves cruciform DNA. This chain is Holliday junction branch migration complex subunit RuvB, found in Lacticaseibacillus paracasei (strain ATCC 334 / BCRC 17002 / CCUG 31169 / CIP 107868 / KCTC 3260 / NRRL B-441) (Lactobacillus paracasei).